Reading from the N-terminus, the 719-residue chain is Potassium-transporting ATPase ATP-binding subunit (719 aa).

4 consecutive transmembrane segments (helical) span residues 35–55 (LFVV…PGLF), 62–82 (VYYA…NYAE), 228–248 (ILLS…FFFG), and 254–274 (FVGG…VALM). Asp318 acts as the 4-aspartylphosphate intermediate in catalysis. 2 residues coordinate ATP: Asp355 and Glu359. The tract at residues 372–396 (GKVQTDGGQSASEELDEPGDSVDAP) is disordered. Positions 373-383 (KVQTDGGQSAS) are enriched in polar residues. ATP-binding positions include 416-423 (FSAETRMS) and Lys435. Mg(2+)-binding residues include Asp554 and Asp558. A run of 3 helical transmembrane segments spans residues 624 to 644 (FVLL…MDIL), 652 to 672 (AVTA…PLAL), and 698 to 718 (LIAP…LGVF).

This sequence belongs to the cation transport ATPase (P-type) (TC 3.A.3) family. Type IA subfamily. As to quaternary structure, the system is composed of three essential subunits: KdpA, KdpB and KdpC. The complex also contains KdpF, a small non-essential subunit.

Its subcellular location is the cell membrane. It catalyses the reaction K(+)(out) + ATP + H2O = K(+)(in) + ADP + phosphate + H(+). Functionally, part of the high-affinity ATP-driven potassium transport (or Kdp) system, which catalyzes the hydrolysis of ATP coupled with the electrogenic transport of potassium into the cytoplasm. This subunit is responsible for energy coupling to the transport system and for the release of the potassium ions to the cytoplasm. The Kdp system is essential for growth under K(+) limitation, and for survival under desiccation and salt crystal inclusion. This chain is Potassium-transporting ATPase ATP-binding subunit, found in Halobacterium salinarum (strain ATCC 29341 / DSM 671 / R1).